A 212-amino-acid chain; its full sequence is Regulatory protein RecX (212 aa).

Belongs to the RecX family.

The protein localises to the cytoplasm. In terms of biological role, modulates RecA activity. The sequence is that of Regulatory protein RecX from Clostridioides difficile (strain 630) (Peptoclostridium difficile).